The chain runs to 164 residues: Lipoprotein signal peptidase (164 aa).

The next 3 membrane-spanning stretches (helical) occupy residues 12 to 32 (WLWL…LILQ), 70 to 90 (WFFA…MYRS), and 102 to 122 (ALII…GFVV). Catalysis depends on residues aspartate 123 and aspartate 141. A helical membrane pass occupies residues 137 to 157 (FNLADTAICVGAALIVLEGFL).

This sequence belongs to the peptidase A8 family.

It is found in the cell inner membrane. It catalyses the reaction Release of signal peptides from bacterial membrane prolipoproteins. Hydrolyzes -Xaa-Yaa-Zaa-|-(S,diacylglyceryl)Cys-, in which Xaa is hydrophobic (preferably Leu), and Yaa (Ala or Ser) and Zaa (Gly or Ala) have small, neutral side chains.. The protein operates within protein modification; lipoprotein biosynthesis (signal peptide cleavage). Its function is as follows. This protein specifically catalyzes the removal of signal peptides from prolipoproteins. The polypeptide is Lipoprotein signal peptidase (Shigella flexneri).